The chain runs to 117 residues: Ribonuclease P protein component 4 (117 aa).

Residues Cys-64, Cys-67, Cys-93, and Cys-96 each coordinate Zn(2+).

This sequence belongs to the eukaryotic/archaeal RNase P protein component 4 family. As to quaternary structure, consists of a catalytic RNA component and at least 4-5 protein subunits. The cofactor is Zn(2+).

It is found in the cytoplasm. It carries out the reaction Endonucleolytic cleavage of RNA, removing 5'-extranucleotides from tRNA precursor.. Functionally, part of ribonuclease P, a protein complex that generates mature tRNA molecules by cleaving their 5'-ends. This chain is Ribonuclease P protein component 4, found in Pyrococcus abyssi (strain GE5 / Orsay).